The primary structure comprises 419 residues: Septin-2 (419 aa).

The 267-residue stretch at 40–306 folds into the Septin-type G domain; sequence NGFVFNVMCI…ELYRQKRLEQ (267 aa). The tract at residues 50-57 is G1 motif; that stretch reads GETGLGKS. Residues 50–57, serine 79, glycine 105, 186–194, glycine 240, and arginine 255 contribute to the GTP site; these read GETGLGKS and KADTISKVE. Residues 102–105 are G3 motif; sequence DTVG. Positions 185–188 are G4 motif; the sequence is AKAD. An important for dimerization region spans residues 259-269; that stretch reads WGTVQVENETH.

It belongs to the TRAFAC class TrmE-Era-EngA-EngB-Septin-like GTPase superfamily. Septin GTPase family. As to quaternary structure, may assemble into a multicomponent structure.

The protein resides in the cytoplasm. The protein localises to the cytoskeleton. It is found in the spindle. In terms of biological role, involved in cytokinesis. This Drosophila melanogaster (Fruit fly) protein is Septin-2.